The sequence spans 239 residues: Cysteine-rich venom protein ENH1 (239 aa).

The signal sequence occupies residues 1 to 18 (MIVFILLSLAAVLQQFVA). Residues 37-165 (VDMHNSFRRS…PYNYFYVCQY (129 aa)) form the SCP domain. Intrachain disulfides connect cysteine 74/cysteine 152, cysteine 91/cysteine 166, cysteine 147/cysteine 163, cysteine 185/cysteine 192, cysteine 188/cysteine 197, cysteine 210/cysteine 228, and cysteine 219/cysteine 232. Residues 201 to 234 (CPITNTFTNCDSLLQQNSCEDSYIKTNCGASCFC) form the ShKT domain.

This sequence belongs to the CRISP family. In terms of tissue distribution, expressed by the venom gland.

The protein localises to the secreted. In terms of biological role, blocks contraction of smooth muscle elicited by high potassium-induced depolarization, but does not block caffeine-stimulated contraction. May target voltage-gated calcium channels on smooth muscle. This chain is Cysteine-rich venom protein ENH1, found in Pseudoferania polylepis (Macleay's water snake).